The chain runs to 348 residues: Phosphoribosylformylglycinamidine cyclo-ligase (348 aa).

Belongs to the AIR synthase family.

The protein resides in the cytoplasm. The catalysed reaction is 2-formamido-N(1)-(5-O-phospho-beta-D-ribosyl)acetamidine + ATP = 5-amino-1-(5-phospho-beta-D-ribosyl)imidazole + ADP + phosphate + H(+). Its pathway is purine metabolism; IMP biosynthesis via de novo pathway; 5-amino-1-(5-phospho-D-ribosyl)imidazole from N(2)-formyl-N(1)-(5-phospho-D-ribosyl)glycinamide: step 2/2. The polypeptide is Phosphoribosylformylglycinamidine cyclo-ligase (Roseobacter denitrificans (strain ATCC 33942 / OCh 114) (Erythrobacter sp. (strain OCh 114))).